The primary structure comprises 361 residues: tRNA-specific 2-thiouridylase MnmA (361 aa).

ATP-binding positions include 6-13 (AMSGGVDS) and Leu-32. The Nucleophile role is filled by Cys-99. A disulfide bridge connects residues Cys-99 and Cys-196. Gly-123 is a binding site for ATP. The tract at residues 145-147 (RDQ) is interaction with tRNA. Cys-196 acts as the Cysteine persulfide intermediate in catalysis.

The protein belongs to the MnmA/TRMU family.

It is found in the cytoplasm. It catalyses the reaction S-sulfanyl-L-cysteinyl-[protein] + uridine(34) in tRNA + AH2 + ATP = 2-thiouridine(34) in tRNA + L-cysteinyl-[protein] + A + AMP + diphosphate + H(+). Functionally, catalyzes the 2-thiolation of uridine at the wobble position (U34) of tRNA, leading to the formation of s(2)U34. In Gluconobacter oxydans (strain 621H) (Gluconobacter suboxydans), this protein is tRNA-specific 2-thiouridylase MnmA.